The sequence spans 72 residues: Translation initiation factor IF-1 2 (72 aa).

The S1-like domain occupies Met1–Lys72.

This sequence belongs to the IF-1 family. Component of the 30S ribosomal translation pre-initiation complex which assembles on the 30S ribosome in the order IF-2 and IF-3, IF-1 and N-formylmethionyl-tRNA(fMet); mRNA recruitment can occur at any time during PIC assembly.

The protein localises to the cytoplasm. Its function is as follows. One of the essential components for the initiation of protein synthesis. Stabilizes the binding of IF-2 and IF-3 on the 30S subunit to which N-formylmethionyl-tRNA(fMet) subsequently binds. Helps modulate mRNA selection, yielding the 30S pre-initiation complex (PIC). Upon addition of the 50S ribosomal subunit IF-1, IF-2 and IF-3 are released leaving the mature 70S translation initiation complex. The protein is Translation initiation factor IF-1 2 of Symbiobacterium thermophilum (strain DSM 24528 / JCM 14929 / IAM 14863 / T).